The following is a 414-amino-acid chain: Chromobox protein homolog 6 (414 aa).

Residues 11 to 69 (FAAESIIKRRIRKGRIEYLVKWKGWAIKYSTWEPEENILDSRLIAAFEQKERERELYGP) enclose the Chromo domain. Serine 107 bears the Phosphoserine mark. Disordered stretches follow at residues 127–152 (HRMSRRPLPRPDPQGGSPGLRPPISP), 267–308 (APFD…VPNW), and 344–365 (ALEPTGAGSSEPEAGDWRPEMS). Over residues 267-287 (APFDAHSSSSSGCPSPTLQSS) the composition is skewed to low complexity.

As to quaternary structure, component of a PRC1-like complex. Distinct PRC1-like core complexes are composed of a RING1 subunit (RING1B or RING1A), one of the six PCGF proteins (PCGF1-6), one PHC protein (PHC1-3) and one of the CBX proteins (CBX2, CBX4, CBX6, CBX7 or CBX8). Interacts with PCGF1, PCGF2, PCGF3, BMI1, PCGF5, PCGF6, RING1 and RNF2. May interact with H3C15 and H3C1. Interacts (via chromodomain) with single-stranded RNA (ssRNA). Ubiquitinated. Ubiquitination regulates the function of the Polycomb group (PcG) multiprotein PRC1-like complex. Deubiquitinated by USP26. As to expression, expressed in mouse embryonic stem cells.

The protein localises to the nucleus. It is found in the chromosome. Component of a Polycomb group (PcG) multiprotein PRC1-like complex, a complex class required to maintain the transcriptionally repressive state of many genes, including Hox genes, throughout development. PcG PRC1 complex acts via chromatin remodeling and modification of histones; it mediates monoubiquitination of histone H2A 'Lys-119', rendering chromatin heritably changed in its expressibility. Possibly contributes to the target selectivity of the PRC1 complex by binding specific regions of chromatin. Recruitment to chromatin might occur in an H3K27me3-independent fashion. May have a PRC1-independent function in embryonic stem cells. In Mus musculus (Mouse), this protein is Chromobox protein homolog 6 (Cbx6).